The primary structure comprises 185 residues: Ribosome-recycling factor (185 aa).

It belongs to the RRF family.

The protein localises to the cytoplasm. In terms of biological role, responsible for the release of ribosomes from messenger RNA at the termination of protein biosynthesis. May increase the efficiency of translation by recycling ribosomes from one round of translation to another. The sequence is that of Ribosome-recycling factor from Geotalea daltonii (strain DSM 22248 / JCM 15807 / FRC-32) (Geobacter daltonii).